The chain runs to 424 residues: Serine--tRNA ligase (424 aa).

230-232 (TAE) is a binding site for L-serine. Residue 261 to 263 (RSE) participates in ATP binding. L-serine is bound at residue glutamate 284. 348–351 (EISS) serves as a coordination point for ATP. L-serine is bound at residue serine 384.

Belongs to the class-II aminoacyl-tRNA synthetase family. Type-1 seryl-tRNA synthetase subfamily. In terms of assembly, homodimer. The tRNA molecule binds across the dimer.

The protein localises to the cytoplasm. The catalysed reaction is tRNA(Ser) + L-serine + ATP = L-seryl-tRNA(Ser) + AMP + diphosphate + H(+). The enzyme catalyses tRNA(Sec) + L-serine + ATP = L-seryl-tRNA(Sec) + AMP + diphosphate + H(+). Its pathway is aminoacyl-tRNA biosynthesis; selenocysteinyl-tRNA(Sec) biosynthesis; L-seryl-tRNA(Sec) from L-serine and tRNA(Sec): step 1/1. Functionally, catalyzes the attachment of serine to tRNA(Ser). Is also able to aminoacylate tRNA(Sec) with serine, to form the misacylated tRNA L-seryl-tRNA(Sec), which will be further converted into selenocysteinyl-tRNA(Sec). This Streptococcus pneumoniae serotype 2 (strain D39 / NCTC 7466) protein is Serine--tRNA ligase.